Consider the following 184-residue polypeptide: Photosystem I assembly protein Ycf4 (184 aa).

Transmembrane regions (helical) follow at residues 19-39 (ISNF…LLVG) and 57-77 (IIFF…LFIS).

This sequence belongs to the Ycf4 family.

The protein localises to the plastid. It localises to the chloroplast thylakoid membrane. Functionally, seems to be required for the assembly of the photosystem I complex. The protein is Photosystem I assembly protein Ycf4 of Cucumis sativus (Cucumber).